The chain runs to 503 residues: MVTHVLAIDQGTTSSRAILFRADTSIAAIAQQEFPQHFPASGWVEHEPEDIWTSTVATCREAMNKAGVTPKDIAAIGITNQRETTVVWDRATGQAMHRAVVWQDRRTADICARLKAEGHEPAISAKTGLIVDPYFSGTKIAWILDSVPGARARASRGDLLFGTVDCYLLWRLTGGKVHATDATNASRTLLFDIHTGQWDEELLKILRVPRAMLPEVKDSSAHFGDSVADLFGAPISIRGIAGDQQAAVVGQACFAPGMIKSTYGTGCFALLNTGATPVASKNKLLTTIAYQLNGKRTYALEGSIFVAGSAVQWLRDGLGLIKQASETGPLADRSDATQSVYLVPAFVGMGAPYWNPNVRGALFGLTRNTGPAELAHAALESVCYQTFDLWAAMRADWPDAAAAHTVLRVDGGMTASDWTMQRLADLLDAPVDRPVIQETTALGAAYLAGLSAGVYPEPSKFADNWRLERRFKPAMSAATRTRKLKGWAAAVRGVLASDGGEGR.

Position 12 (Thr-12) interacts with ADP. Positions 12, 13, and 14 each coordinate ATP. Thr-12 provides a ligand contact to sn-glycerol 3-phosphate. Arg-16 contacts ADP. Sn-glycerol 3-phosphate-binding residues include Arg-82, Glu-83, Tyr-134, and Asp-243. Residues Arg-82, Glu-83, Tyr-134, Asp-243, and Gln-244 each coordinate glycerol. The ADP site is built by Thr-265 and Gly-308. Residues Thr-265, Gly-308, Gln-312, and Gly-412 each contribute to the ATP site. Gly-412 contributes to the ADP binding site.

The protein belongs to the FGGY kinase family.

It carries out the reaction glycerol + ATP = sn-glycerol 3-phosphate + ADP + H(+). It functions in the pathway polyol metabolism; glycerol degradation via glycerol kinase pathway; sn-glycerol 3-phosphate from glycerol: step 1/1. With respect to regulation, inhibited by fructose 1,6-bisphosphate (FBP). Functionally, key enzyme in the regulation of glycerol uptake and metabolism. Catalyzes the phosphorylation of glycerol to yield sn-glycerol 3-phosphate. The protein is Glycerol kinase of Nitrobacter hamburgensis (strain DSM 10229 / NCIMB 13809 / X14).